We begin with the raw amino-acid sequence, 344 residues long: Cinnamoyl-CoA reductase 1 (344 aa).

The residue at position 7 (S7) is a Phosphoserine. Residues 17 to 23 (GAGGYIA), R42, K48, 68 to 69 (DL), 88 to 90 (TAS), Y161, K165, 188 to 191 (PVLV), and S203 each bind NADP(+). C154 and C162 are oxidised to a cystine. K165 functions as the Proton donor in the catalytic mechanism. Positions 317–344 (QEKGHLAPPPPPPSASQESVENGIKIGS) are disordered.

This sequence belongs to the NAD(P)-dependent epimerase/dehydratase family. Dihydroflavonol-4-reductase subfamily. Expressed in leaves, stems and flowers.

The enzyme catalyses (E)-cinnamaldehyde + NADP(+) + CoA = (E)-cinnamoyl-CoA + NADPH + H(+). Its pathway is aromatic compound metabolism; phenylpropanoid biosynthesis. Involved in the latter stages of lignin biosynthesis. Catalyzes one of the last steps of monolignol biosynthesis, the conversion of cinnamoyl-CoAs into their corresponding cinnamaldehydes. This is Cinnamoyl-CoA reductase 1 from Arabidopsis thaliana (Mouse-ear cress).